Consider the following 161-residue polypeptide: 2-C-methyl-D-erythritol 2,4-cyclodiphosphate synthase (161 aa).

Residues D10 and H12 each coordinate a divalent metal cation. Residues 10 to 12 and 36 to 37 contribute to the 4-CDP-2-C-methyl-D-erythritol 2-phosphate site; these read DVH and HS. A divalent metal cation is bound at residue H44. Residues 58–60, 63–67, 102–108, 134–137, F141, and R144 each bind 4-CDP-2-C-methyl-D-erythritol 2-phosphate; these read DIG, FPDTD, AQAPKML, and TTTE.

This sequence belongs to the IspF family. In terms of assembly, homotrimer. A divalent metal cation serves as cofactor.

It catalyses the reaction 4-CDP-2-C-methyl-D-erythritol 2-phosphate = 2-C-methyl-D-erythritol 2,4-cyclic diphosphate + CMP. It participates in isoprenoid biosynthesis; isopentenyl diphosphate biosynthesis via DXP pathway; isopentenyl diphosphate from 1-deoxy-D-xylulose 5-phosphate: step 4/6. In terms of biological role, involved in the biosynthesis of isopentenyl diphosphate (IPP) and dimethylallyl diphosphate (DMAPP), two major building blocks of isoprenoid compounds. Catalyzes the conversion of 4-diphosphocytidyl-2-C-methyl-D-erythritol 2-phosphate (CDP-ME2P) to 2-C-methyl-D-erythritol 2,4-cyclodiphosphate (ME-CPP) with a corresponding release of cytidine 5-monophosphate (CMP). The chain is 2-C-methyl-D-erythritol 2,4-cyclodiphosphate synthase from Shewanella loihica (strain ATCC BAA-1088 / PV-4).